A 150-amino-acid polypeptide reads, in one-letter code: NKERTFIMVKPDGVQRGLVGKIIERFEQKGFKLVALKFTWASKELLEKHYADLSARPFFPGLVNYMNSGPVVPMVWEGLNVVKTGRQMLGATNPADSLPGTIRGDFCIQVGRNIIHGSDAVESAEKEIALWFNEKELVTWTPAAKDWIYE.

6 residues coordinate ATP: Lys-10, Phe-58, Arg-86, Thr-92, Arg-103, and Asn-113. Catalysis depends on His-116, which acts as the Pros-phosphohistidine intermediate.

Belongs to the NDK family. Homohexamer. Mg(2+) serves as cofactor.

The catalysed reaction is a 2'-deoxyribonucleoside 5'-diphosphate + ATP = a 2'-deoxyribonucleoside 5'-triphosphate + ADP. The enzyme catalyses a ribonucleoside 5'-diphosphate + ATP = a ribonucleoside 5'-triphosphate + ADP. Major role in the synthesis of nucleoside triphosphates other than ATP. The ATP gamma phosphate is transferred to the NDP beta phosphate via a ping-pong mechanism, using a phosphorylated active-site intermediate. The sequence is that of Nucleoside diphosphate kinase (awd) from Drosophila yakuba (Fruit fly).